The primary structure comprises 145 residues: Large ribosomal subunit protein uL11 (145 aa).

It belongs to the universal ribosomal protein uL11 family. As to quaternary structure, part of the ribosomal stalk of the 50S ribosomal subunit. Interacts with L10 and the large rRNA to form the base of the stalk. L10 forms an elongated spine to which L12 dimers bind in a sequential fashion forming a multimeric L10(L12)X complex. Post-translationally, one or more lysine residues are methylated.

Forms part of the ribosomal stalk which helps the ribosome interact with GTP-bound translation factors. This chain is Large ribosomal subunit protein uL11, found in Rickettsia prowazekii (strain Madrid E).